A 293-amino-acid chain; its full sequence is Elongation factor Ts (293 aa).

The interval 79–82 (TDFV) is involved in Mg(2+) ion dislocation from EF-Tu.

Belongs to the EF-Ts family.

The protein localises to the cytoplasm. Associates with the EF-Tu.GDP complex and induces the exchange of GDP to GTP. It remains bound to the aminoacyl-tRNA.EF-Tu.GTP complex up to the GTP hydrolysis stage on the ribosome. The protein is Elongation factor Ts (tsf) of Halalkalibacterium halodurans (strain ATCC BAA-125 / DSM 18197 / FERM 7344 / JCM 9153 / C-125) (Bacillus halodurans).